An 84-amino-acid chain; its full sequence is Protein myomixer (84 aa).

The Cytoplasmic portion of the chain corresponds to 1–4 (MPTP). Residues 5–25 (LLPLLLRLLLSCLLLPAARLA) traverse the membrane as a helical segment. The Extracellular portion of the chain corresponds to 26–84 (RQYLLPLLRRLARRLGSQDMREALLGCLLFILSQRHSPDAGEASRVDRLERRERLGPQK). The AxLyCxL signature appears at 48–57 (ALLGCLLFIL). A disordered region spans residues 62 to 84 (SPDAGEASRVDRLERRERLGPQK).

The protein belongs to the MYMX family. Interacts with MYMK.

The protein localises to the cell membrane. In terms of biological role, myoblast-specific protein that mediates myoblast fusion, an essential step for the formation of multi-nucleated muscle fibers. Involved in membrane fusion downstream of the lipid mixing step mediated by MYMK. Acts by generating membrane stresses via its extracellular C-terminus, leading to drive fusion pore formation. Acts independently of MYMK. Involved in skeletal muscle regeneration in response to injury by mediating the fusion of satellite cells, a population of muscle stem cells, with injured myofibers. In Homo sapiens (Human), this protein is Protein myomixer.